The following is a 349-amino-acid chain: tRNA pseudouridine synthase D (349 aa).

Substrate is bound at residue F27. The active-site Nucleophile is the D80. N129 is a binding site for substrate. One can recognise a TRUD domain in the interval 155-303 (GVPNYFGAQR…VEAARRAMLL (149 aa)). Position 329 (F329) interacts with substrate.

It belongs to the pseudouridine synthase TruD family.

It catalyses the reaction uridine(13) in tRNA = pseudouridine(13) in tRNA. Its function is as follows. Responsible for synthesis of pseudouridine from uracil-13 in transfer RNAs. The chain is tRNA pseudouridine synthase D from Escherichia coli (strain K12 / MC4100 / BW2952).